The primary structure comprises 427 residues: Glutamate-1-semialdehyde 2,1-aminomutase 1 (427 aa).

K267 carries the post-translational modification N6-(pyridoxal phosphate)lysine.

This sequence belongs to the class-III pyridoxal-phosphate-dependent aminotransferase family. HemL subfamily. In terms of assembly, homodimer. It depends on pyridoxal 5'-phosphate as a cofactor.

The protein localises to the cytoplasm. It carries out the reaction (S)-4-amino-5-oxopentanoate = 5-aminolevulinate. It participates in porphyrin-containing compound metabolism; protoporphyrin-IX biosynthesis; 5-aminolevulinate from L-glutamyl-tRNA(Glu): step 2/2. The sequence is that of Glutamate-1-semialdehyde 2,1-aminomutase 1 from Staphylococcus epidermidis (strain ATCC 35984 / DSM 28319 / BCRC 17069 / CCUG 31568 / BM 3577 / RP62A).